The sequence spans 259 residues: MEIVIRQTPSEVSSTVADIVEGYVRRGPATLGLATGSSPLGSYRELARRHRESGLDFSDARAFLLDEYVGLPKSHDQSYFSVIRSEFVDHVNLDTDRVLSPNGESPDIAEEGARYDAAIAEAGGVDVQLLGIGTDGHIGFNEPGSALTSRTRVKTLTEQTRLDNARFFDSVDDVPHHVLTQGLGTIGEARHLVMIAFGKGKAEAIAAAAEGPLSAFCPASVMQLHRHVTVVIDEAAASKLQLADYYRYALEHKPSWQSF.

D66 (proton acceptor; for enolization step) is an active-site residue. The active-site For ring-opening step is D135. The Proton acceptor; for ring-opening step role is filled by H137. E142 functions as the For ring-opening step in the catalytic mechanism.

It belongs to the glucosamine/galactosamine-6-phosphate isomerase family. NagB subfamily.

It carries out the reaction alpha-D-glucosamine 6-phosphate + H2O = beta-D-fructose 6-phosphate + NH4(+). It functions in the pathway amino-sugar metabolism; N-acetylneuraminate degradation; D-fructose 6-phosphate from N-acetylneuraminate: step 5/5. In terms of biological role, catalyzes the reversible isomerization-deamination of glucosamine 6-phosphate (GlcN6P) to form fructose 6-phosphate (Fru6P) and ammonium ion. This is Glucosamine-6-phosphate deaminase from Rhodococcus jostii (strain RHA1).